Here is a 1270-residue protein sequence, read N- to C-terminus: Microtubule-associated tumor suppressor 1 homolog (1270 aa).

The segment covering 1-14 (MTDDNSDDKIEDEL) has biased composition (acidic residues). Disordered regions lie at residues 1–50 (MTDD…NSAN), 183–217 (SFHT…DKMH), and 374–402 (TEDT…SPPG). Residues 39–50 (SSASSVNWNSAN) show a composition bias toward low complexity. Phosphothreonine is present on Thr186. Residues 200-211 (TSSLSYSTWTSS) are compositionally biased toward low complexity. Residues Ser386, Ser399, and Ser443 each carry the phosphoserine modification. Positions 386 to 396 (SGTQNHTSELI) are enriched in polar residues. Disordered regions lie at residues 524 to 558 (DAAL…RTPR) and 592 to 622 (THSK…SSSN). A compositionally biased stretch (low complexity) spans 538–547 (SASSPSSAIS). Ser629 carries the phosphoserine modification. Composition is skewed to polar residues over residues 701–710 (SKTTTTSGRN), 759–776 (VSSS…SSWV), and 797–816 (TGST…YSNN). Residues 701-816 (SKTTTTSGRN…HSELSTYSNN (116 aa)) form a disordered region. Residues 940 to 1231 (IQHLLSEREE…RLSMENEELL (292 aa)) adopt a coiled-coil conformation. Phosphoserine is present on residues Ser1203, Ser1224, Ser1245, Ser1255, Ser1259, Ser1261, Ser1264, and Ser1268. A disordered region spans residues 1237–1270 (GDLCSPKRSPTSSAIPFQSPRNSGSFPSPSISPR). Over residues 1244 to 1270 (RSPTSSAIPFQSPRNSGSFPSPSISPR) the composition is skewed to polar residues.

It belongs to the MTUS1 family. In terms of assembly, homodimer. Interacts with AGTR2. Interacts with PTPN6. Associates with microtubules.

The protein resides in the mitochondrion. The protein localises to the golgi apparatus. It is found in the cell membrane. Its subcellular location is the nucleus. Functionally, cooperates with AGTR2 to inhibit ERK2 activation and cell proliferation. May be required for AGTR2 cell surface expression. Together with PTPN6, induces UBE2V2 expression upon angiotensin-II stimulation. This is Microtubule-associated tumor suppressor 1 homolog (MTUS1) from Pongo abelii (Sumatran orangutan).